Here is a 487-residue protein sequence, read N- to C-terminus: N-succinylglutamate 5-semialdehyde dehydrogenase (487 aa).

An NAD(+)-binding site is contributed by 221–226 (GSSDTG). Residues Glu244 and Cys278 contribute to the active site.

It belongs to the aldehyde dehydrogenase family. AstD subfamily.

The catalysed reaction is N-succinyl-L-glutamate 5-semialdehyde + NAD(+) + H2O = N-succinyl-L-glutamate + NADH + 2 H(+). Its pathway is amino-acid degradation; L-arginine degradation via AST pathway; L-glutamate and succinate from L-arginine: step 4/5. Catalyzes the NAD-dependent reduction of succinylglutamate semialdehyde into succinylglutamate. In Burkholderia ambifaria (strain ATCC BAA-244 / DSM 16087 / CCUG 44356 / LMG 19182 / AMMD) (Burkholderia cepacia (strain AMMD)), this protein is N-succinylglutamate 5-semialdehyde dehydrogenase.